Consider the following 695-residue polypeptide: MAALLASQSCCYGGETARVTKAIGFSSSLENHFTGEATQCYGSKSKRFRIEMRQSELPSKVGINGRSVKMVPASEVVKRKDGVNGSAGKGVNGASLVSSRNINGAASTLVKAPKKTTESYLPPPVEGVRVLPSDEGFSWADENYSSLQRSIDVWSFVISLRIRILFDNSKWAYVGGFTEEKQKSRRRETASWLRESVLQLGPTFIKLGQLSSTRSDLFPREFVDELSKLQDRVPAFSPEKAKRFIEAELGAPISVMYKEFEEQPIAAASLGQVHRAVLHNGEKVVVKVQRPGLKKLFDIDLRNLKLIAEYFQKSESFGTNDWVGIYEECALILYQEIDYINEAKNADRFRRDFRNINWVRVPLVYWDYSAMKVLTLEYVPGVKINNLDALAARGFNRSRIASRAIEAYLIQILKTGFFHADPHPGNLAIDVDESIIYYDFGMMGEIKTFTRKRLLDLFYSVYEKDAKKVMQNLIDLEALQPTGDLSSVRRSVQFFLDNLLSQSPDQQQTLAAIGEDLFAISQDQPFRFPSTFTFVIRAFSTLEGIGYILDPEFSFVKVAAPYAQELLDLKQRQRSGTQLVQEIRKQADDARSSTLSMPYRVQRIEEFVKELDSGDLKLRVRVLESERAARKATILQMATMYTVLGGTLLNIGVTFSNQGSQLVANGSFIGAGIFMLLVLRSMQRVNKLDKFEKMI.

One can recognise a Protein kinase domain in the interval 259 to 589 (EFEEQPIAAA…VQEIRKQADD (331 aa)). ATP-binding positions include 265-273 (IAAASLGQV) and Lys-287. The active-site Proton acceptor is the Asp-421. The next 2 helical transmembrane spans lie at 633–653 (TILQMATMYTVLGGTLLNIGV) and 659–679 (GSQLVANGSFIGAGIFMLLVL).

It belongs to the protein kinase superfamily. ADCK protein kinase family. Mostly expressed in leaves and flowers, and, to a lower extent, in roots.

The protein resides in the plastid. Its subcellular location is the chloroplast thylakoid membrane. The protein localises to the chloroplast. It is found in the plastoglobule. It carries out the reaction L-seryl-[protein] + ATP = O-phospho-L-seryl-[protein] + ADP + H(+). It catalyses the reaction L-threonyl-[protein] + ATP = O-phospho-L-threonyl-[protein] + ADP + H(+). Functionally, involved in resistance to oxidative stress. Influences responses to reactive oxygen species (ROS) production. Regulates plastoglobules formation in thylakoids. Together with OSA1, regulates iron distribution within the chloroplast and mediates the oxidative stress response. Together with ABC1K8, influences chloroplast lipid synthesis/accumulation and modulates chloroplast membrane composition in response to stress. This is Protein ACTIVITY OF BC1 COMPLEX KINASE 7, chloroplastic from Arabidopsis thaliana (Mouse-ear cress).